A 474-amino-acid chain; its full sequence is Synaptotagmin-17 (474 aa).

The disordered stretch occupies residues 60-112; it reads WLMASRSSDKDGDSVHTASEVPLTPRTNSPDGRRSSSDTSKSTYSLTRRISSL. Over residues 96-112 the composition is skewed to low complexity; it reads SDTSKSTYSLTRRISSL. A phosphoserine mark is found at Ser-118 and Ser-119. 2 consecutive C2 domains span residues 184–310 and 321–455; these read QLGM…HWWK and ELGE…EQWH.

This sequence belongs to the synaptotagmin family. Expressed abundantly in brain (frontal and temporal lobes, hippocampus, hypothalamus, amygdala, substantia nigra, and pituitary), kidney, and prostate. Expressed in fetal brain, kidney and lung. Expressed in melanocytes.

It localises to the membrane. Functionally, plays a role in dendrite formation by melanocytes. The protein is Synaptotagmin-17 (SYT17) of Homo sapiens (Human).